We begin with the raw amino-acid sequence, 249 residues long: 1-(5-phosphoribosyl)-5-[(5-phosphoribosylamino)methylideneamino] imidazole-4-carboxamide isomerase (249 aa).

Asp8 serves as the catalytic Proton acceptor. Asp130 (proton donor) is an active-site residue.

The protein belongs to the HisA/HisF family.

It is found in the cytoplasm. It catalyses the reaction 1-(5-phospho-beta-D-ribosyl)-5-[(5-phospho-beta-D-ribosylamino)methylideneamino]imidazole-4-carboxamide = 5-[(5-phospho-1-deoxy-D-ribulos-1-ylimino)methylamino]-1-(5-phospho-beta-D-ribosyl)imidazole-4-carboxamide. It participates in amino-acid biosynthesis; L-histidine biosynthesis; L-histidine from 5-phospho-alpha-D-ribose 1-diphosphate: step 4/9. This is 1-(5-phosphoribosyl)-5-[(5-phosphoribosylamino)methylideneamino] imidazole-4-carboxamide isomerase from Nitrosococcus oceani (strain ATCC 19707 / BCRC 17464 / JCM 30415 / NCIMB 11848 / C-107).